The primary structure comprises 106 residues: Valine dehydrogenase (106 aa).

Residue K91 is part of the active site.

The protein belongs to the Glu/Leu/Phe/Val dehydrogenases family. As to quaternary structure, homodimer.

Its subcellular location is the cytoplasm. It catalyses the reaction L-valine + NAD(+) + H2O = 3-methyl-2-oxobutanoate + NH4(+) + NADH + H(+). Its pathway is amino-acid degradation; L-valine degradation. In terms of biological role, oxidative deamination of branched-chain amino acids. The catabolism of valine is the major source of fatty acid precursors for macrolide biosynthesis and a vital source of antibiotic precursors. This is Valine dehydrogenase (vdh) from Streptomyces ambofaciens.